The following is an 843-amino-acid chain: DNA gyrase subunit A (843 aa).

The 468-residue stretch at 61 to 528 (LPDVRDGLKP…ESSTFNAEDL (468 aa)) folds into the Topo IIA-type catalytic domain. Y149 functions as the O-(5'-phospho-DNA)-tyrosine intermediate in the catalytic mechanism. Positions 555–561 (QKRGGKG) match the GyrA-box motif.

This sequence belongs to the type II topoisomerase GyrA/ParC subunit family. In terms of assembly, heterotetramer, composed of two GyrA and two GyrB chains. In the heterotetramer, GyrA contains the active site tyrosine that forms a transient covalent intermediate with DNA, while GyrB binds cofactors and catalyzes ATP hydrolysis.

Its subcellular location is the cytoplasm. It catalyses the reaction ATP-dependent breakage, passage and rejoining of double-stranded DNA.. A type II topoisomerase that negatively supercoils closed circular double-stranded (ds) DNA in an ATP-dependent manner to modulate DNA topology and maintain chromosomes in an underwound state. Negative supercoiling favors strand separation, and DNA replication, transcription, recombination and repair, all of which involve strand separation. Also able to catalyze the interconversion of other topological isomers of dsDNA rings, including catenanes and knotted rings. Type II topoisomerases break and join 2 DNA strands simultaneously in an ATP-dependent manner. This chain is DNA gyrase subunit A, found in Leptospira biflexa serovar Patoc (strain Patoc 1 / Ames).